We begin with the raw amino-acid sequence, 467 residues long: tRNA-2-methylthio-N(6)-dimethylallyladenosine synthase (467 aa).

Positions 1-20 (MSDDTTQIEPAMAQETSPRA) are disordered. An MTTase N-terminal domain is found at 23 to 143 (RKVFVKTYGC…LPNALARVRG (121 aa)). Residues Cys32, Cys68, Cys106, Cys184, Cys188, and Cys191 each coordinate [4Fe-4S] cluster. The region spanning 170-402 (RKRGVSAFLT…QALLSAQQYA (233 aa)) is the Radical SAM core domain. The region spanning 405–467 (DSMIGRKMDV…TNSLIAQKLA (63 aa)) is the TRAM domain.

The protein belongs to the methylthiotransferase family. MiaB subfamily. Monomer. [4Fe-4S] cluster serves as cofactor.

Its subcellular location is the cytoplasm. The enzyme catalyses N(6)-dimethylallyladenosine(37) in tRNA + (sulfur carrier)-SH + AH2 + 2 S-adenosyl-L-methionine = 2-methylsulfanyl-N(6)-dimethylallyladenosine(37) in tRNA + (sulfur carrier)-H + 5'-deoxyadenosine + L-methionine + A + S-adenosyl-L-homocysteine + 2 H(+). In terms of biological role, catalyzes the methylthiolation of N6-(dimethylallyl)adenosine (i(6)A), leading to the formation of 2-methylthio-N6-(dimethylallyl)adenosine (ms(2)i(6)A) at position 37 in tRNAs that read codons beginning with uridine. This Brucella melitensis biotype 1 (strain ATCC 23456 / CCUG 17765 / NCTC 10094 / 16M) protein is tRNA-2-methylthio-N(6)-dimethylallyladenosine synthase.